A 369-amino-acid polypeptide reads, in one-letter code: S-(hydroxymethyl)glutathione dehydrogenase (369 aa).

Residues Cys40, His62, Cys92, Cys95, Cys98, Cys106, and Cys169 each contribute to the Zn(2+) site.

Belongs to the zinc-containing alcohol dehydrogenase family. Class-III subfamily. In terms of assembly, homodimer. Zn(2+) is required as a cofactor.

It localises to the cytoplasm. It catalyses the reaction S-(hydroxymethyl)glutathione + NADP(+) = S-formylglutathione + NADPH + H(+). The enzyme catalyses S-(hydroxymethyl)glutathione + NAD(+) = S-formylglutathione + NADH + H(+). The catalysed reaction is a primary alcohol + NAD(+) = an aldehyde + NADH + H(+). It carries out the reaction a secondary alcohol + NAD(+) = a ketone + NADH + H(+). It catalyses the reaction S-nitrosoglutathione + NADH + H(+) = S-(hydroxysulfenamide)glutathione + NAD(+). In terms of biological role, has high formaldehyde dehydrogenase activity in the presence of glutathione and catalyzes the oxidation of normal alcohols in a reaction that is not GSH-dependent. In addition, hemithiolacetals other than those formed from GSH, including omega-thiol fatty acids, also are substrates. Also acts as a S-nitroso-glutathione reductase by catalyzing the NADH-dependent reduction of S-nitrosoglutathione. This chain is S-(hydroxymethyl)glutathione dehydrogenase (frmA), found in Escherichia coli (strain SMS-3-5 / SECEC).